Here is a 234-residue protein sequence, read N- to C-terminus: HTH-type transcriptional regulator ArcR (234 aa).

A nucleoside 3',5'-cyclic phosphate is bound at residue 40–129; that stretch reads VRHYTKGQVI…MAFLCKANDD (90 aa). The HTH crp-type domain occupies 155–228; that stretch reads KFAKDRIIKL…HKNWLVSKHL (74 aa). Positions 188-207 form a DNA-binding region, H-T-H motif; it reads IQLMSDMAGISRETAGHIIH.

Its subcellular location is the cytoplasm. Positively regulates the expression of the arcABDCR operon under anaerobic conditions, thus playing an essential role in arginine catabolism. May also control the expression of genes encoding proteins which are involved in anaerobic metabolism. Can bind cyclic AMP. The protein is HTH-type transcriptional regulator ArcR (arcR) of Staphylococcus aureus (strain MSSA476).